A 327-amino-acid chain; its full sequence is GMP reductase (327 aa).

Cysteine 176 acts as the Thioimidate intermediate in catalysis. Isoleucine 205–valine 228 contributes to the NADP(+) binding site.

Belongs to the IMPDH/GMPR family. GuaC type 2 subfamily.

It carries out the reaction IMP + NH4(+) + NADP(+) = GMP + NADPH + 2 H(+). Catalyzes the irreversible NADPH-dependent deamination of GMP to IMP. It functions in the conversion of nucleobase, nucleoside and nucleotide derivatives of G to A nucleotides, and in maintaining the intracellular balance of A and G nucleotides. In Streptococcus pyogenes serotype M3 (strain ATCC BAA-595 / MGAS315), this protein is GMP reductase.